The primary structure comprises 606 residues: Probable methyltransferase PMT5 (606 aa).

Residues 1-20 lie on the Cytoplasmic side of the membrane; the sequence is MRGSWYKSVSSVFGLRPRIR. The chain crosses the membrane as a helical; Signal-anchor for type II membrane protein span at residues 21–41; sequence GLLFFIVGVVALVTILAPLTS. At 42-606 the chain is on the lumenal side; that stretch reads NSYDSSSSST…LVCQKPFIKK (565 aa). 2 N-linked (GlcNAc...) asparagine glycosylation sites follow: Asn101 and Asn409.

The protein belongs to the methyltransferase superfamily.

It localises to the endoplasmic reticulum membrane. This chain is Probable methyltransferase PMT5, found in Arabidopsis thaliana (Mouse-ear cress).